The following is a 131-amino-acid chain: D-ribose pyranase (131 aa).

His20 acts as the Proton donor in catalysis. Residues Asp28, His98, and 120–122 (YAN) contribute to the substrate site.

The protein belongs to the RbsD / FucU family. RbsD subfamily. As to quaternary structure, homodecamer.

It localises to the cytoplasm. It catalyses the reaction beta-D-ribopyranose = beta-D-ribofuranose. Its pathway is carbohydrate metabolism; D-ribose degradation; D-ribose 5-phosphate from beta-D-ribopyranose: step 1/2. Its function is as follows. Catalyzes the interconversion of beta-pyran and beta-furan forms of D-ribose. This Bacillus thuringiensis (strain Al Hakam) protein is D-ribose pyranase.